The sequence spans 399 residues: Large envelope protein (399 aa).

An N-acetylmethionine modification is found at Met-1. A lipid anchor (N-myristoyl glycine; by host) is attached at Gly-2. A pre-S1 region spans residues 2–118 (GLSWTVPLEW…PPLRDTHPQA (117 aa)). The pre-S stretch occupies residues 2–173 (GLSWTVPLEW…FSRIGDPAPN (172 aa)). Residues 2 to 180 (GLSWTVPLEW…APNMESITSG (179 aa)) lie on the Virion surface; in external conformation side of the membrane. The Intravirion; in internal conformation segment spans residues 2–252 (GLSWTVPLEW…PGYRWMCLRR (251 aa)). A glycan (N-linked (GlcNAc...) asparagine) is linked at Ser-4. The interval 85 to 110 (KTLPADPPPASTNRQSGRQPTPITPP) is disordered. A compositionally biased stretch (polar residues) spans 95–105 (STNRQSGRQPT). Residues 119 to 173 (MQWNSTTFHQALQDPRVRGLYFPAGGSSSGTVNPVPTTASLISSIFSRIGDPAPN) are pre-S2. The helical transmembrane segment at 181-201 (FLGPLLVLQAGFFLLTKILTI) threads the bilayer. The Intravirion; in external conformation segment spans residues 202-252 (PQSLDSWWTSLNFLGGAPVCLGQNSQSPTSNHSPTSCPPICPGYRWMCLRR). The chain crosses the membrane as a helical span at residues 253–273 (FIIFLFILLLCLIFLLVLLDY). Topologically, residues 274–347 (QGMLPVCPLI…WASARFSWLS (74 aa)) are virion surface. Asn-319 carries N-linked (GlcNAc...) asparagine; by host glycosylation. The chain crosses the membrane as a helical span at residues 348 to 368 (LLVPFVQWFAGLSPTVWLSVI). Residues 369–374 (WMMWYW) lie on the Intravirion side of the membrane. Residues 375–397 (GPSLYDILSPFIPLLPIFFCLWV) form a helical membrane-spanning segment. Over 398–399 (YI) the chain is Virion surface.

The protein belongs to the orthohepadnavirus major surface antigen family. In its internal form (Li-HBsAg), interacts with the capsid protein and with the isoform S. Interacts with host chaperone CANX. In terms of assembly, associates with host chaperone CANX through its pre-S2 N glycan; this association may be essential for isoform M proper secretion. As to quaternary structure, interacts with isoform L. Interacts with the antigens of satellite virus HDV (HDVAgs); this interaction is required for encapsidation of HDV genomic RNA. In terms of processing, isoform M is N-terminally acetylated by host at a ratio of 90%, and N-glycosylated by host at the pre-S2 region. Myristoylated.

Its subcellular location is the virion membrane. In terms of biological role, the large envelope protein exists in two topological conformations, one which is termed 'external' or Le-HBsAg and the other 'internal' or Li-HBsAg. In its external conformation the protein attaches the virus to cell receptors and thereby initiating infection. This interaction determines the species specificity and liver tropism. This attachment induces virion internalization predominantly through caveolin-mediated endocytosis. The large envelope protein also assures fusion between virion membrane and endosomal membrane. In its internal conformation the protein plays a role in virion morphogenesis and mediates the contact with the nucleocapsid like a matrix protein. Functionally, the middle envelope protein plays an important role in the budding of the virion. It is involved in the induction of budding in a nucleocapsid independent way. In this process the majority of envelope proteins bud to form subviral lipoprotein particles of 22 nm of diameter that do not contain a nucleocapsid. This chain is Large envelope protein, found in Homo sapiens (Human).